We begin with the raw amino-acid sequence, 82 residues long: Probable 26S proteasome complex subunit dss-1 (82 aa).

The disordered stretch occupies residues 56 to 82 (NWDDETHESEFSKQLKEELRKSGHQVA). Residues 63-76 (ESEFSKQLKEELRK) are compositionally biased toward basic and acidic residues.

It belongs to the DSS1/SEM1 family. As to quaternary structure, part of the 26S proteasome. Expressed in intestinal epithelium and head neurons.

The protein resides in the nucleus. Its subcellular location is the cytoplasm. In terms of biological role, subunit of the 26S proteasome which plays a role in ubiquitin-dependent proteolysis. Has an essential role in oogenesis and larval growth. Required for intestinal function and default lifespan. This chain is Probable 26S proteasome complex subunit dss-1 (dss-1), found in Caenorhabditis elegans.